We begin with the raw amino-acid sequence, 366 residues long: MDHIKLIRNKIDINHIHQLIIDQSCGACSVFVGTTRDHFEGKKVISLEYEAYESMALKEMGKICSELRIRWPTLKHIAIYHRLGSVPVAEESVVIAVSAPHRPAALESVSFAVDKLKSSVPIWKKEIYENDQIGEWKANMECPWPQFTETSSNAFEYSLCKIERQVENISESKLVQIRVSDIELTRRIKCFLKRKRDEINLHNIIDFKQQLRDSPRAESMLPKDSCARTQSILVKQQQSISHIKVHRAFEDRRQTRPDYSSQLNKLMATKHKHCELVKSNVLKNARLQNIEEYMRITPDDEDNIYNRIKNIENRILILESTSPEYKYYIKLGKESNNINKKESKKGLYQSDRLSEFISGIKRQYEL.

Substrate contacts are provided by residues His-101 to Arg-102, Lys-117, and Lys-124 to Glu-126.

It belongs to the MoaE family. MOCS2B subfamily. In terms of assembly, heterotetramer; composed of 2 small (Mocs2A) and 2 large (Mocs2B) subunits.

Its subcellular location is the cytoplasm. It catalyses the reaction 2 [molybdopterin-synthase sulfur-carrier protein]-C-terminal-Gly-aminoethanethioate + cyclic pyranopterin phosphate + H2O = molybdopterin + 2 [molybdopterin-synthase sulfur-carrier protein]-C-terminal Gly-Gly + 2 H(+). Its pathway is cofactor biosynthesis; molybdopterin biosynthesis. In terms of biological role, catalytic subunit of the molybdopterin synthase complex, a complex that catalyzes the conversion of precursor Z into molybdopterin. Acts by mediating the incorporation of 2 sulfur atoms from thiocarboxylated Mocs2A into precursor Z to generate a dithiolene group. The polypeptide is Molybdopterin synthase catalytic subunit (Drosophila mojavensis (Fruit fly)).